Consider the following 251-residue polypeptide: WUSCHEL-related homeobox 4 (251 aa).

Disordered stretches follow at residues 1 to 21 and 33 to 93; these read MKVHEFSNGFSSSWDQHDSTS and LAPK…RWNP. A compositionally biased stretch (low complexity) spans 11–21; sequence SSSWDQHDSTS. Basic and acidic residues predominate over residues 71–83; the sequence is KFEHKRDPPHQLE. The homeobox; WUS-type DNA-binding region spans 86-150; the sequence is PGGTRWNPTQ…NHKARERQKQ (65 aa).

It belongs to the WUS homeobox family. As to expression, expressed in the vasculature of the whole plant (roots, hypocotyls, cotyledons and leaves), trichomes and stomata. Expresse in the developing vascular bundles of root and shoot lateral organs.

It localises to the nucleus. Functionally, promotes differentiation and/or maintenance of the vascular procambium, the initial cells of the developing vasculature. Part of the TDIF-TDR-WOX4 signaling pathway that plays a crucial role in the maintenance of the vascular meristem organization during secondary growth. Is required for promoting the proliferation of procambial/cambial stem cells but not for repressing their commitment to xylem differentiation in response to the TDIF signal. Acts redundantly with WOX14 downstream of the TDR/PXY receptor kinase to regulate procambial cell proliferation and differentiation in vascular tissue, independently of any role in vascular. Acts as a cambium regulator in the inflorescence stem. Is required for auxin-dependent cambium stimulation in the inflorescence stem. This is WUSCHEL-related homeobox 4 (WOX4) from Arabidopsis thaliana (Mouse-ear cress).